A 710-amino-acid chain; its full sequence is Effector protein AvrPphD (710 aa).

Residues 1 to 15 (MNPLRSIQHNITTPP) show a composition bias toward polar residues. 3 disordered regions span residues 1–36 (MNPL…HPKR), 136–155 (ISFD…SVLS), and 173–207 (SSSL…DSGS).

The protein localises to the secreted. Effector protein involved in non-host recognition and able to elicit hypersensitive response (HR). The chain is Effector protein AvrPphD (avrPphD) from Pseudomonas savastanoi pv. phaseolicola (Pseudomonas syringae pv. phaseolicola).